The primary structure comprises 332 residues: Nuclear migration protein nudC (332 aa).

A disordered region spans residues 122–161; the sequence is RQQLLDSAGGEPSASNRDGISKPIEKVDDESDKSELGKLM. The region spanning 168 to 259 is the CS domain; sequence CTLENYTWTQ…NKMNWWSRLV (92 aa).

It belongs to the nudC family. In terms of assembly, interacts with PCID2.

The protein resides in the cytoplasm. Functionally, chaperone protein with functions in nuclear localization and cytoplasmic mRNA trafficking. In postmitotic neurons, acts with nudE downstream of dar1 to ensure correct positioning of the nuclei in primary dendrites and as a consequence, is required for determining multipolar neuron morphology. Stabilizes PCID2 in the cytoplasm and thereby is required for promoting cytoplasmic mRNA trafficking. This chain is Nuclear migration protein nudC, found in Drosophila melanogaster (Fruit fly).